The following is a 1032-amino-acid chain: Toll-like receptor 9 (1032 aa).

An N-terminal signal peptide occupies residues 1–25 (MGPCRGALHPLSLLVQAAALALALA). Residues 26-815 (QGTLPAFLPC…QDLRLCLDEA (790 aa)) are Extracellular-facing. A disulfide bridge connects residues Cys-35 and Cys-45. DNA is bound at residue 47–51 (WLFLK). LRR repeat units follow at residues 62–85 (RGNV…DFVH), 87–110 (VHLR…HFPC), 122–147 (VPTL…SLVS), 150–166 (LSRT…LAGL), 167–190 (YALR…ALQV), 198–221 (LGNL…LPPS), 223–242 (EYLL…DLAN), 243–268 (LTAL…CREC), 283–306 (LSHL…WFHG), 308–332 (GNLM…AFYG), 333–356 (LARL…HLHL), 363–386 (LLSL…TLQS), 390–413 (LPML…IFGA), 415–440 (PGLR…TGEV), 472–496 (CRTL…MFVR), 498–521 (ARLQ…QFVP), 522–545 (LSNL…SFTE), 547–574 (PRLE…SFVA), 576–600 (LPAL…LRSA), 602–624 (LRAL…LYLR), 629–652 (LRSL…NLDN), 654–677 (PKSL…SLAL), 678–701 (LPKL…SLPN), 703–725 (TQLQ…FFAL), 726–749 (AVRL…WFGS), and 751–774 (AGAL…TFVD). An N-linked (GlcNAc...) asparagine glycan is attached at Asn-64. Residues 72–77 (SNRIHH) and 95–109 (KWNC…MHFP) each bind DNA. Cysteines 98 and 110 form a disulfide. A glycan (N-linked (GlcNAc...) asparagine) is linked at Asn-129. DNA is bound by residues Tyr-132, Arg-152, and 179–181 (YYK). A disulfide bond links Cys-178 and Cys-184. N-linked (GlcNAc...) asparagine glycosylation is present at Asn-200. Tyr-208 is a binding site for DNA. 2 N-linked (GlcNAc...) asparagine glycosylation sites follow: Asn-210 and Asn-242. 2 cysteine pairs are disulfide-bonded: Cys-255/Cys-268 and Cys-258/Cys-265. Residue Cys-258 is the site of S-palmitoyl cysteine attachment. Arg-262 contributes to the DNA binding site. Cys-265 carries S-palmitoyl cysteine lipidation. An N-linked (GlcNAc...) asparagine glycan is attached at Asn-340. An intrachain disulfide couples Cys-472 to Cys-502. N-linked (GlcNAc...) asparagine glycans are attached at residues Asn-476 and Asn-515. N-linked (GlcNAc...) asparagine glycosylation occurs at Asn-569. Residues Asn-671, Asn-696, and Asn-701 are each glycosylated (N-linked (GlcNAc...) asparagine). The N-linked (GlcNAc...) asparagine glycan is linked to Asn-733. Cystine bridges form between Cys-766/Cys-792 and Cys-768/Cys-811. A helical membrane pass occupies residues 816-836 (LSWVCFSLSLLAVALSLAVPM). Over 837–1032 (LHQLCGWDLW…QNFCRGPTTA (196 aa)) the chain is Cytoplasmic. A TIR domain is found at 868 to 1013 (LAYDAFVVFD…SFWAQLGTAL (146 aa)).

The protein belongs to the Toll-like receptor family. As to quaternary structure, monomer and homodimer. Exists as a monomer in the absence of unmethylated cytidine-phosphate-guanosine (CpG) ligand. Proteolytic processing of an insertion loop (Z-loop) is required for homodimerization upon binding to the unmethylated CpG ligand leading to its activation. Interacts with MYD88 via their respective TIR domains. Interacts with BTK. Interacts (via transmembrane domain) with UNC93B1. Interacts with CD300LH; the interaction may promote full activation of TLR9-triggered innate responses. Interacts with CNPY3 and HSP90B1; this interaction is required for proper folding in the endoplasmic reticulum. Interacts with SMPDL3B. Interacts with CD82; this interaction is essential for TLR9-dependent myddosome formation in response to CpG stimulation. Activated by proteolytic cleavage of the flexible loop between repeats LRR14 and LRR15 within the ectodomain. Cleavage requires UNC93B1. Proteolytically processed by first removing the majority of the ectodomain by either asparagine endopeptidase (AEP) or a cathepsin followed by a trimming event that is solely cathepsin mediated and required for optimal receptor signaling. In terms of processing, palmitoylated by ZDHHC3 in the Golgi regulates TLR9 trafficking from the Golgi to endosomes. Depalmitoylation by PPT1 controls the release of TLR9 from UNC93B1 in endosomes.

It localises to the endoplasmic reticulum membrane. Its subcellular location is the endosome. The protein localises to the lysosome. The protein resides in the cytoplasmic vesicle. It is found in the phagosome. Functionally, key component of innate and adaptive immunity. TLRs (Toll-like receptors) control host immune response against pathogens through recognition of molecular patterns specific to microorganisms. TLR9 is a nucleotide-sensing TLR which is activated by unmethylated cytidine-phosphate-guanosine (CpG) dinucleotides. Acts via MYD88 and TRAF6, leading to NF-kappa-B activation, cytokine secretion and the inflammatory response. Upon CpG stimulation, induces B-cell proliferation, activation, survival and antibody production. In Canis lupus familiaris (Dog), this protein is Toll-like receptor 9 (TLR9).